The primary structure comprises 118 residues: Large ribosomal subunit protein uL24 (118 aa).

This sequence belongs to the universal ribosomal protein uL24 family. As to quaternary structure, part of the 50S ribosomal subunit.

Functionally, one of two assembly initiator proteins, it binds directly to the 5'-end of the 23S rRNA, where it nucleates assembly of the 50S subunit. In terms of biological role, one of the proteins that surrounds the polypeptide exit tunnel on the outside of the subunit. The polypeptide is Large ribosomal subunit protein uL24 (Prochlorococcus marinus (strain MIT 9303)).